A 467-amino-acid chain; its full sequence is Ribulose bisphosphate carboxylase large chain (467 aa).

An N6,N6,N6-trimethyllysine modification is found at K6. Substrate contacts are provided by N115 and T165. Residue K167 is the Proton acceptor of the active site. Substrate is bound at residue K169. K193, D195, and E196 together coordinate Mg(2+). The residue at position 193 (K193) is an N6-carboxylysine. H286 functions as the Proton acceptor in the catalytic mechanism. Residues R287, H319, and S371 each coordinate substrate.

This sequence belongs to the RuBisCO large chain family. Type I subfamily. Heterohexadecamer of 8 large chains and 8 small chains; disulfide-linked. The disulfide link is formed within the large subunit homodimers. Mg(2+) serves as cofactor. In terms of processing, the disulfide bond which can form in the large chain dimeric partners within the hexadecamer appears to be associated with oxidative stress and protein turnover.

The protein localises to the plastid. It is found in the chloroplast. It carries out the reaction 2 (2R)-3-phosphoglycerate + 2 H(+) = D-ribulose 1,5-bisphosphate + CO2 + H2O. The enzyme catalyses D-ribulose 1,5-bisphosphate + O2 = 2-phosphoglycolate + (2R)-3-phosphoglycerate + 2 H(+). Its function is as follows. RuBisCO catalyzes two reactions: the carboxylation of D-ribulose 1,5-bisphosphate, the primary event in carbon dioxide fixation, as well as the oxidative fragmentation of the pentose substrate in the photorespiration process. Both reactions occur simultaneously and in competition at the same active site. The protein is Ribulose bisphosphate carboxylase large chain of Cedrus atlantica (Atlas cedar).